Reading from the N-terminus, the 299-residue chain is 4-diphosphocytidyl-2-C-methyl-D-erythritol kinase (299 aa).

K20 is an active-site residue. ATP is bound at residue 106–116 (PMGGGLGGGSS). D148 is an active-site residue.

The protein belongs to the GHMP kinase family. IspE subfamily. As to quaternary structure, homodimer.

It carries out the reaction 4-CDP-2-C-methyl-D-erythritol + ATP = 4-CDP-2-C-methyl-D-erythritol 2-phosphate + ADP + H(+). It participates in isoprenoid biosynthesis; isopentenyl diphosphate biosynthesis via DXP pathway; isopentenyl diphosphate from 1-deoxy-D-xylulose 5-phosphate: step 3/6. Catalyzes the phosphorylation of the position 2 hydroxy group of 4-diphosphocytidyl-2C-methyl-D-erythritol. The polypeptide is 4-diphosphocytidyl-2-C-methyl-D-erythritol kinase (Yersinia pseudotuberculosis serotype O:1b (strain IP 31758)).